The chain runs to 245 residues: Transcriptional activator protein ExpR (245 aa).

Residues 173-238 (RSNDKDIFSQ…HAIRLGIELQ (66 aa)) form the HTH luxR-type domain. A DNA-binding region (H-T-H motif) is located at residues 197–216 (YQEIALILDIKTGTVKFHIG).

It belongs to the autoinducer-regulated transcriptional regulatory protein family.

Functionally, functions as an OHLL responsive transcriptional regulator that acts in virulence (soft rot disease) through the activation of genes for plant tissue macerating enzymes. In Pectobacterium parmentieri, this protein is Transcriptional activator protein ExpR (expR).